Consider the following 255-residue polypeptide: D-aminoacyl-tRNA deacylase (255 aa).

This sequence belongs to the DtdA deacylase family. Monomer. Zn(2+) is required as a cofactor.

The enzyme catalyses a D-aminoacyl-tRNA + H2O = a tRNA + a D-alpha-amino acid + H(+). It carries out the reaction glycyl-tRNA(Ala) + H2O = tRNA(Ala) + glycine + H(+). D-aminoacyl-tRNA deacylase with broad substrate specificity. By recycling D-aminoacyl-tRNA to D-amino acids and free tRNA molecules, this enzyme counteracts the toxicity associated with the formation of D-aminoacyl-tRNA entities in vivo. This chain is D-aminoacyl-tRNA deacylase, found in Picrophilus torridus (strain ATCC 700027 / DSM 9790 / JCM 10055 / NBRC 100828 / KAW 2/3).